A 209-amino-acid polypeptide reads, in one-letter code: Large ribosomal subunit protein uL3 (209 aa).

Residues 129-153 (SRGPMSHGSKFHRAPGSMGAASDPS) form a disordered region.

It belongs to the universal ribosomal protein uL3 family. In terms of assembly, part of the 50S ribosomal subunit. Forms a cluster with proteins L14 and L19.

Its function is as follows. One of the primary rRNA binding proteins, it binds directly near the 3'-end of the 23S rRNA, where it nucleates assembly of the 50S subunit. The polypeptide is Large ribosomal subunit protein uL3 (Clostridium perfringens (strain 13 / Type A)).